The chain runs to 131 residues: Small ribosomal subunit protein bS6 (131 aa).

Position 93 is an N6-acetyllysine (Lys93). Residues 98–131 (EASPMVKAKDERRERRDDFANETADDAEAGDSEE) are disordered. The segment covering 104-116 (KAKDERRERRDDF) has biased composition (basic and acidic residues). Residues 120–131 (TADDAEAGDSEE) show a composition bias toward acidic residues.

Belongs to the bacterial ribosomal protein bS6 family.

Binds together with bS18 to 16S ribosomal RNA. The polypeptide is Small ribosomal subunit protein bS6 (Escherichia fergusonii (strain ATCC 35469 / DSM 13698 / CCUG 18766 / IAM 14443 / JCM 21226 / LMG 7866 / NBRC 102419 / NCTC 12128 / CDC 0568-73)).